The primary structure comprises 313 residues: tRNA-cytidine(32) 2-sulfurtransferase (313 aa).

The PP-loop motif motif lies at 47–52 (SGGKDS). The [4Fe-4S] cluster site is built by Cys122, Cys125, and Cys213.

This sequence belongs to the TtcA family. Homodimer. Mg(2+) serves as cofactor. The cofactor is [4Fe-4S] cluster.

It localises to the cytoplasm. It carries out the reaction cytidine(32) in tRNA + S-sulfanyl-L-cysteinyl-[cysteine desulfurase] + AH2 + ATP = 2-thiocytidine(32) in tRNA + L-cysteinyl-[cysteine desulfurase] + A + AMP + diphosphate + H(+). Its pathway is tRNA modification. Its function is as follows. Catalyzes the ATP-dependent 2-thiolation of cytidine in position 32 of tRNA, to form 2-thiocytidine (s(2)C32). The sulfur atoms are provided by the cysteine/cysteine desulfurase (IscS) system. The sequence is that of tRNA-cytidine(32) 2-sulfurtransferase from Yersinia enterocolitica serotype O:8 / biotype 1B (strain NCTC 13174 / 8081).